The sequence spans 117 residues: Large ribosomal subunit protein bL20 (117 aa).

This sequence belongs to the bacterial ribosomal protein bL20 family.

Binds directly to 23S ribosomal RNA and is necessary for the in vitro assembly process of the 50S ribosomal subunit. It is not involved in the protein synthesizing functions of that subunit. This chain is Large ribosomal subunit protein bL20, found in Crocosphaera subtropica (strain ATCC 51142 / BH68) (Cyanothece sp. (strain ATCC 51142)).